A 417-amino-acid chain; its full sequence is Phosphoglycerate kinase (417 aa).

Residues Val-23, Asp-24, Phe-25, Asn-26, Gln-38, Arg-39, Ser-62, His-63, Gly-65, Arg-66, Leu-121, Arg-122, His-169, and Arg-170 each contribute to the (2R)-3-phosphoglycerate site. Residue Gly-213 coordinates ADP. Gly-213 contacts CDP. AMP is bound by residues Ala-214 and Lys-215. Ala-214 is a binding site for ATP. Ala-214 is a binding site for Mg(2+). Residue Asp-218 participates in CDP binding. A Mg(2+)-binding site is contributed by Asp-218. Lys-219 serves as a coordination point for AMP. Position 219 (Lys-219) interacts with ATP. Gly-237 contributes to the ADP binding site. Gly-237 contributes to the CDP binding site. Positions 238 and 312 each coordinate AMP. 2 residues coordinate ATP: Gly-238 and Gly-312. Positions 337 and 342 each coordinate CDP. An ADP-binding site is contributed by Phe-342. Glu-343 contributes to the AMP binding site. Positions 343, 374, and 375 each coordinate ATP. Position 374 (Asp-374) interacts with Mg(2+).

It belongs to the phosphoglycerate kinase family. Monomer. Mg(2+) is required as a cofactor.

The protein localises to the cytoplasm. It localises to the secreted. It is found in the cell wall. Its subcellular location is the mitochondrion. The enzyme catalyses (2R)-3-phosphoglycerate + ATP = (2R)-3-phospho-glyceroyl phosphate + ADP. It functions in the pathway carbohydrate degradation; glycolysis; pyruvate from D-glyceraldehyde 3-phosphate: step 2/5. In terms of biological role, catalyzes one of the two ATP producing reactions in the glycolytic pathway via the reversible conversion of 1,3-diphosphoglycerate to 3-phosphoglycerate. Both L- and D- forms of purine and pyrimidine nucleotides can be used as substrates, but the activity is much lower on pyrimidines. Negatively regulates the biosynthesis of acetyl-CoA from pyruvate in the mitochondrion. In Candida albicans (strain SC5314 / ATCC MYA-2876) (Yeast), this protein is Phosphoglycerate kinase (PGK1).